The chain runs to 947 residues: Valine--tRNA ligase (947 aa).

The 'HIGH' region signature appears at 45 to 55; it reads PNVTGSLHMGH. A 'KMSKS' region motif is present at residues 591–595; it reads KMSKS. Residue lysine 594 participates in ATP binding.

The protein belongs to the class-I aminoacyl-tRNA synthetase family. ValS type 1 subfamily. Monomer.

Its subcellular location is the cytoplasm. It carries out the reaction tRNA(Val) + L-valine + ATP = L-valyl-tRNA(Val) + AMP + diphosphate. Its function is as follows. Catalyzes the attachment of valine to tRNA(Val). As ValRS can inadvertently accommodate and process structurally similar amino acids such as threonine, to avoid such errors, it has a 'posttransfer' editing activity that hydrolyzes mischarged Thr-tRNA(Val) in a tRNA-dependent manner. The protein is Valine--tRNA ligase of Rhizobium meliloti (strain 1021) (Ensifer meliloti).